Consider the following 298-residue polypeptide: GTPase Era (298 aa).

The Era-type G domain maps to 8–176 (HCGSVAVIGR…VRDVLALLPE (169 aa)). Residues 16-23 (GRPNVGKS) are G1. Position 16–23 (16–23 (GRPNVGKS)) interacts with GTP. A G2 region spans residues 42-46 (QTTRH). Residues 63–66 (DTPG) are G3. GTP contacts are provided by residues 63 to 67 (DTPGL) and 125 to 128 (NKID). Residues 125 to 128 (NKID) are G4. A G5 region spans residues 155–157 (ISA). The KH type-2 domain occupies 199–283 (VREQLMRQLG…FLETWVRVRE (85 aa)).

It belongs to the TRAFAC class TrmE-Era-EngA-EngB-Septin-like GTPase superfamily. Era GTPase family. In terms of assembly, monomer.

It is found in the cytoplasm. The protein resides in the cell inner membrane. Functionally, an essential GTPase that binds both GDP and GTP, with rapid nucleotide exchange. Plays a role in 16S rRNA processing and 30S ribosomal subunit biogenesis and possibly also in cell cycle regulation and energy metabolism. The protein is GTPase Era of Stenotrophomonas maltophilia (strain R551-3).